A 172-amino-acid polypeptide reads, in one-letter code: Putative defense protein (172 aa).

Positions 1–21 are cleaved as a signal peptide; it reads MKLVVAAVLAMAASRWRRLSA. Positions 22–172 constitute a Reelin domain; the sequence is HGQVPSSTCA…LRQLDNAVAA (151 aa).

The protein belongs to the insect defense protein family. As to expression, in adults, in hemolymph.

The protein resides in the secreted. In terms of biological role, may have antimicrobial activity. The sequence is that of Putative defense protein from Locusta migratoria (Migratory locust).